A 337-amino-acid chain; its full sequence is Visual pigment-like receptor peropsin (337 aa).

At 1–26 (MLSEASDFNSSGSRSEGSVFSRTEHS) the chain is on the extracellular side. Asparagine 9 carries N-linked (GlcNAc...) asparagine glycosylation. Residues 27–49 (VIAAYLIVAGITSILSNVVVLGI) traverse the membrane as a helical segment. Topologically, residues 50 to 61 (FIKYKELRTPTN) are cytoplasmic. The helical transmembrane segment at 62-87 (AVIINLAFTDIGVSSIGYPMSAASDL) threads the bilayer. Topologically, residues 88–101 (HGSWKFGHAGCQIY) are extracellular. Cysteine 98 and cysteine 175 form a disulfide bridge. A helical membrane pass occupies residues 102–121 (AGLNIFFGMVSIGLLTVVAM). Topologically, residues 122–140 (DRYLTISCPDVGRRMTTNT) are cytoplasmic. The helical transmembrane segment at 141–164 (YLSMILGAWINGLFWALMPIIGWA) threads the bilayer. Topologically, residues 165–188 (SYAPDPTGATCTINWRNNDTSFVS) are extracellular. N-linked (GlcNAc...) asparagine glycosylation occurs at asparagine 182. The chain crosses the membrane as a helical span at residues 189 to 212 (YTMMVIVVNFIVPLTVMFYCYYHV). Residues 213-240 (SRSLRLYAASDCTAHLHRDWADQADVTK) are Cytoplasmic-facing. A helical transmembrane segment spans residues 241–264 (MSVIMILMFLLAWSPYSIVCLWAC). Residues 265 to 272 (FGNPKKIP) lie on the Extracellular side of the membrane. The chain crosses the membrane as a helical span at residues 273 to 297 (PSMAIIAPLFAKSSTFYNPCIYVAA). The residue at position 284 (lysine 284) is an N6-(retinylidene)lysine. At 298–337 (HKKFRKAMLAMFKCQPHLAVPEPSTLPMDMPQSSLAPVRI) the chain is on the cytoplasmic side.

Belongs to the G-protein coupled receptor 1 family. Opsin subfamily. As to expression, found only in the eye, where it is localized to the retinal pigment epithelium (RPE). In the RPE, it is localized to the microvilli that surround the photoreceptor outer segments.

The protein localises to the membrane. Functionally, may play a role in rpe physiology either by detecting light directly or by monitoring the concentration of retinoids or other photoreceptor-derived compounds. The polypeptide is Visual pigment-like receptor peropsin (Rrh) (Mus musculus (Mouse)).